The chain runs to 908 residues: Serine/threonine-protein kinase WARTS homolog (908 aa).

Positions Glu-42 to Ser-70 form a coiled coil. Low complexity-rich tracts occupy residues Val-115–Ser-125 and Pro-168–Glu-181. Disordered stretches follow at residues Val-115–Lys-134, Met-162–Ser-183, Asn-203–Pro-225, and Lys-388–Pro-412. The span at Gln-392–Pro-404 shows a compositional bias: pro residues. Residues Tyr-439 to Leu-470 adopt a coiled-coil conformation. The 306-residue stretch at Phe-502–Phe-807 folds into the Protein kinase domain. Residues Ile-508–Val-516 and Lys-531 contribute to the ATP site. Asp-625 acts as the Proton acceptor in catalysis. The AGC-kinase C-terminal domain occupies Arg-808–Gly-874.

It belongs to the protein kinase superfamily. AGC Ser/Thr protein kinase family. Interacts (via N-terminus) with yap-1 (via WW domain). Mg(2+) is required as a cofactor. As to expression, expressed in muscles and epithelial tissues including pharynx, intestine and hypodermis. Expressed in vulval and spermathecal seam cells.

The protein localises to the cytoplasm. Its subcellular location is the apical cell membrane. It catalyses the reaction L-seryl-[protein] + ATP = O-phospho-L-seryl-[protein] + ADP + H(+). It carries out the reaction L-threonyl-[protein] + ATP = O-phospho-L-threonyl-[protein] + ADP + H(+). Functionally, phosphorylates yap-1 which may negatively regulate yap-1 nuclear localization. Plays an essential role in larval development. Regulates growth, the formation of gut granules, lifespan and cell and body sizes probably in synergy with the TGF-beta sma/mab pathway. Does not appear to regulate apoptosis and proliferation. In addition, may synergize with the TGF-beta daf-7 dauer pathway to regulate entry into the dauer stage. Maintains the cellular integrity of intestinal cells by regulating the localization of apical actin and junctional proteins. This chain is Serine/threonine-protein kinase WARTS homolog, found in Caenorhabditis elegans.